A 283-amino-acid polypeptide reads, in one-letter code: MKQYLDLCQRIVNDGTWIENERTGKRCLTVINADLEYDVGNNQFPLVTTRKSFWKAAVAELLGYIRGYDNAEDFRKLGTKTWDANSNLNEAWLNNPYRKGEDDMGRVYGVQGRAWAKPDGGHIDQLKKIVDDLTNGIDDRGEILNFYNPGEFHMGCLRPCMYSHHFSLLGDTLYLNSTQRSCDVPLGLNFNMVQVYVFLAIMAQITGKKAGVAYHKLVNAHIYEDQLAPMRDIQLKREPLAGPTFHINPEIKSLEDLETWVTMDDFWVEGYECHEAIKYPFSV.

Residue Arg22 coordinates dUMP. Catalysis depends on Cys160, which acts as the Nucleophile. DUMP is bound by residues 180–183 (RSCD), Asn191, and 221–223 (HIY). Position 183 (Asp183) interacts with (6R)-5,10-methylene-5,6,7,8-tetrahydrofolate. Ser282 lines the (6R)-5,10-methylene-5,6,7,8-tetrahydrofolate pocket.

It belongs to the thymidylate synthase family. Bacterial-type ThyA subfamily. Homodimer.

Its subcellular location is the cytoplasm. The enzyme catalyses dUMP + (6R)-5,10-methylene-5,6,7,8-tetrahydrofolate = 7,8-dihydrofolate + dTMP. It functions in the pathway pyrimidine metabolism; dTTP biosynthesis. Catalyzes the reductive methylation of 2'-deoxyuridine-5'-monophosphate (dUMP) to 2'-deoxythymidine-5'-monophosphate (dTMP) while utilizing 5,10-methylenetetrahydrofolate (mTHF) as the methyl donor and reductant in the reaction, yielding dihydrofolate (DHF) as a by-product. This enzymatic reaction provides an intracellular de novo source of dTMP, an essential precursor for DNA biosynthesis. In Vibrio atlanticus (strain LGP32) (Vibrio splendidus (strain Mel32)), this protein is Thymidylate synthase.